The chain runs to 316 residues: Porphobilinogen deaminase (316 aa).

The residue at position 245 (Cys245) is an S-(dipyrrolylmethanemethyl)cysteine.

The protein belongs to the HMBS family. In terms of assembly, monomer. Dipyrromethane is required as a cofactor.

The catalysed reaction is 4 porphobilinogen + H2O = hydroxymethylbilane + 4 NH4(+). It participates in porphyrin-containing compound metabolism; protoporphyrin-IX biosynthesis; coproporphyrinogen-III from 5-aminolevulinate: step 2/4. It functions in the pathway porphyrin-containing compound metabolism; chlorophyll biosynthesis. Tetrapolymerization of the monopyrrole PBG into the hydroxymethylbilane pre-uroporphyrinogen in several discrete steps. This Synechococcus sp. (strain CC9311) protein is Porphobilinogen deaminase.